The chain runs to 398 residues: 1-deoxy-D-xylulose 5-phosphate reductoisomerase (398 aa).

NADPH is bound by residues Thr-10, Gly-11, Ser-12, Ile-13, Lys-37, Asn-38, and Asn-124. Lys-125 is a 1-deoxy-D-xylulose 5-phosphate binding site. Glu-126 is an NADPH binding site. Mn(2+) is bound at residue Asp-150. 1-deoxy-D-xylulose 5-phosphate is bound by residues Ser-151, Glu-152, Ser-186, and His-209. Glu-152 is a binding site for Mn(2+). NADPH is bound at residue Gly-215. Residues Ser-222, Asn-227, Lys-228, and Glu-231 each contribute to the 1-deoxy-D-xylulose 5-phosphate site. Glu-231 contacts Mn(2+).

This sequence belongs to the DXR family. In terms of assembly, homodimer. Mg(2+) serves as cofactor. It depends on Mn(2+) as a cofactor.

It carries out the reaction 2-C-methyl-D-erythritol 4-phosphate + NADP(+) = 1-deoxy-D-xylulose 5-phosphate + NADPH + H(+). It functions in the pathway isoprenoid biosynthesis; isopentenyl diphosphate biosynthesis via DXP pathway; isopentenyl diphosphate from 1-deoxy-D-xylulose 5-phosphate: step 1/6. Functionally, catalyzes the NADPH-dependent rearrangement and reduction of 1-deoxy-D-xylulose-5-phosphate (DXP) to 2-C-methyl-D-erythritol 4-phosphate (MEP). This chain is 1-deoxy-D-xylulose 5-phosphate reductoisomerase, found in Buchnera aphidicola subsp. Schizaphis graminum (strain Sg).